The sequence spans 426 residues: MNEIKKRCSFCNKEESLDNPIINSGITPDVYICNYCLIVGSEILTGYLNKNPQQDQEAIDIKTPSPKELKAKLDEYVIGQDEAKRVFSVAVYNHYKRIKANSLSEEEMPNPILQDDVELSKSNILLIGPTGSGKTLMAQTLARFLDIPIAISDATSLTEAGYVGEDVENILTRLLQAADGDVKKAEKGIVFIDEIDKISRLSENRSITRDVSGEGVQQALLKIIEGSVVNIPPKGGRKHPNQEFVQINTSDILFVCGGAFDGLGDIIKRRLGGNVLGFHGEKKGKSEEDALLKYVEPDDLISYGLIPELIGRLHMITTLSPISKEAMVEILTKPKNALIKQYQKIFEIDGATLHFEKDAIESIAELAIARKTGARGLRSIMEGAMIDLMYDLPELAGYEITISKECIMDKQSPLRVKKKRNIQKRA.

One can recognise a ClpX-type ZB domain in the interval 1–52; it reads MNEIKKRCSFCNKEESLDNPIINSGITPDVYICNYCLIVGSEILTGYLNKNP. Residues C8, C11, C33, and C36 each coordinate Zn(2+). 129 to 136 contacts ATP; it reads PTGSGKTL.

This sequence belongs to the ClpX chaperone family. Component of the ClpX-ClpP complex. Forms a hexameric ring that, in the presence of ATP, binds to fourteen ClpP subunits assembled into a disk-like structure with a central cavity, resembling the structure of eukaryotic proteasomes.

Its function is as follows. ATP-dependent specificity component of the Clp protease. It directs the protease to specific substrates. Can perform chaperone functions in the absence of ClpP. The chain is ATP-dependent Clp protease ATP-binding subunit ClpX from Helicobacter hepaticus (strain ATCC 51449 / 3B1).